Consider the following 513-residue polypeptide: ATP synthase subunit alpha 1 (513 aa).

169–176 (GDRQTGKT) contacts ATP.

Belongs to the ATPase alpha/beta chains family. In terms of assembly, F-type ATPases have 2 components, CF(1) - the catalytic core - and CF(0) - the membrane proton channel. CF(1) has five subunits: alpha(3), beta(3), gamma(1), delta(1), epsilon(1). CF(0) has three main subunits: a(1), b(2) and c(9-12). The alpha and beta chains form an alternating ring which encloses part of the gamma chain. CF(1) is attached to CF(0) by a central stalk formed by the gamma and epsilon chains, while a peripheral stalk is formed by the delta and b chains.

The protein localises to the cell inner membrane. It carries out the reaction ATP + H2O + 4 H(+)(in) = ADP + phosphate + 5 H(+)(out). Its function is as follows. Produces ATP from ADP in the presence of a proton gradient across the membrane. The alpha chain is a regulatory subunit. This is ATP synthase subunit alpha 1 from Nitrosomonas eutropha (strain DSM 101675 / C91 / Nm57).